The chain runs to 274 residues: Cytochrome b-c1 complex subunit Rieske, mitochondrial (274 aa).

At 79–103 (SHTDIKVPDFSDYRRAEVLDSTKSS) the chain is on the mitochondrial matrix side. The chain crosses the membrane as a helical span at residues 104–140 (KESSEARKGFSYLVTATTTVGVAYAAKNAVSQFVSSM). The Mitochondrial intermembrane portion of the chain corresponds to 141–274 (SASADVLAMS…FTSGDVVVVG (134 aa)). One can recognise a Rieske domain in the interval 187–272 (EAAVEVSQLR…YEFTSGDVVV (86 aa)). [2Fe-2S] cluster-binding residues include C217, H219, C236, H239, and S241. Residues C222 and C238 are joined by a disulfide bond.

It belongs to the Rieske iron-sulfur protein family. Component of the ubiquinol-cytochrome c oxidoreductase (cytochrome b-c1 complex, complex III, CIII), a multisubunit enzyme composed of 11 subunits. The complex is composed of 3 respiratory subunits cytochrome b, cytochrome c1 and Rieske protein UQCRFS1, 2 core protein subunits UQCRC1/QCR1 and UQCRC2/QCR2, and 6 low-molecular weight protein subunits UQCRH/QCR6, UQCRB/QCR7, UQCRQ/QCR8, UQCR10/QCR9, UQCR11/QCR10 and subunit 9, the cleavage product of Rieske protein UQCRFS1. The complex exists as an obligatory dimer and forms supercomplexes (SCs) in the inner mitochondrial membrane with NADH-ubiquinone oxidoreductase (complex I, CI) and cytochrome c oxidase (complex IV, CIV), resulting in different assemblies (supercomplex SCI(1)III(2)IV(1) and megacomplex MCI(2)III(2)IV(2)). Incorporation of the Rieske protein UQCRFS1 is the penultimate step in complex III assembly. Interacts with TTC19, which is involved in the clearance of UQCRFS1 fragments. In terms of assembly, component of the ubiquinol-cytochrome c oxidoreductase (cytochrome b-c1 complex, complex III, CIII). Subunit 9 corresponds to the mitochondrial targeting sequence (MTS) of Rieske protein UQCRFS1. It is retained after processing and incorporated inside complex III, where it remains bound to the complex and localizes between the 2 core subunits UQCRC1/QCR1 and UQCRC2/QCR2. [2Fe-2S] cluster is required as a cofactor. In terms of processing, proteolytic processing is necessary for the correct insertion of UQCRFS1 in the complex III dimer. Several fragments are generated during UQCRFS1 insertion, most probably due to the endogenous matrix-processing peptidase (MPP) activity of the 2 core protein subunits UQCRC1/QCR1 and UQCRC2/QCR2, which are homologous to the 2 mitochondrial-processing peptidase (MPP) subunits beta-MPP and alpha-MPP respectively. The action of the protease is also necessary for the clearance of the UQCRFS1 fragments.

It is found in the mitochondrion inner membrane. The enzyme catalyses a quinol + 2 Fe(III)-[cytochrome c](out) = a quinone + 2 Fe(II)-[cytochrome c](out) + 2 H(+)(out). Component of the ubiquinol-cytochrome c oxidoreductase, a multisubunit transmembrane complex that is part of the mitochondrial electron transport chain which drives oxidative phosphorylation. The respiratory chain contains 3 multisubunit complexes succinate dehydrogenase (complex II, CII), ubiquinol-cytochrome c oxidoreductase (cytochrome b-c1 complex, complex III, CIII) and cytochrome c oxidase (complex IV, CIV), that cooperate to transfer electrons derived from NADH and succinate to molecular oxygen, creating an electrochemical gradient over the inner membrane that drives transmembrane transport and the ATP synthase. The cytochrome b-c1 complex catalyzes electron transfer from ubiquinol to cytochrome c, linking this redox reaction to translocation of protons across the mitochondrial inner membrane, with protons being carried across the membrane as hydrogens on the quinol. In the process called Q cycle, 2 protons are consumed from the matrix, 4 protons are released into the intermembrane space and 2 electrons are passed to cytochrome c. The Rieske protein is a catalytic core subunit containing a [2Fe-2S] iron-sulfur cluster. It cycles between 2 conformational states during catalysis to transfer electrons from the quinol bound in the Q(0) site in cytochrome b to cytochrome c1. Incorporation of UQCRFS1 is the penultimate step in complex III assembly. In terms of biological role, component of the ubiquinol-cytochrome c oxidoreductase (cytochrome b-c1 complex, complex III, CIII). UQCRFS1 undergoes proteolytic processing once it is incorporated in the complex III dimer. One of the fragments, called subunit 9, corresponds to its mitochondrial targeting sequence (MTS). The proteolytic processing is necessary for the correct insertion of UQCRFS1 in the complex III dimer, but the persistence of UQCRFS1-derived fragments may prevent newly imported UQCRFS1 to be processed and assembled into complex III and is detrimental for the complex III structure and function. In Rattus norvegicus (Rat), this protein is Cytochrome b-c1 complex subunit Rieske, mitochondrial (Uqcrfs1).